Consider the following 247-residue polypeptide: MTYESFAYWYDKLMNEAPYDAWQSFVQKKLKQYGRQGAKRILDVGCGTGELAVRLAKEGFLVTGVDLSENMLAIAQAKAEAQQVTIEFFQQNMTELEGFSSFDCVTIFCDSLNYLLEESEVRQTFSRIYELLKEDGLLLFDVHSTYKMDHIFQDAIFTSNDEEISYIWSCYPLSLPHSVEHELTFFVRGDDGKYERHDELHRQCTYEIDQYKQWLTEAGFTVLEITADFTDEAPSETSERVFFVAKK.

The protein belongs to the methyltransferase superfamily.

May be a S-adenosyl-L-methionine (SAM)-dependent methyltransferase. This Geobacillus sp. (strain WCH70) protein is Putative methyltransferase GWCH70_2453.